A 345-amino-acid chain; its full sequence is DNA-directed RNA polymerase subunit alpha (345 aa).

The alpha N-terminal domain (alpha-NTD) stretch occupies residues 1–234 (MRKNEMSTSK…DLLTTFLYVR (234 aa)). The segment at 266 to 345 (LEERVLENRF…DKKIVLNRRK (80 aa)) is alpha C-terminal domain (alpha-CTD).

The protein belongs to the RNA polymerase alpha chain family. In plastids the minimal PEP RNA polymerase catalytic core is composed of four subunits: alpha, beta, beta', and beta''. When a (nuclear-encoded) sigma factor is associated with the core the holoenzyme is formed, which can initiate transcription.

It is found in the plastid. Its subcellular location is the chloroplast. It catalyses the reaction RNA(n) + a ribonucleoside 5'-triphosphate = RNA(n+1) + diphosphate. DNA-dependent RNA polymerase catalyzes the transcription of DNA into RNA using the four ribonucleoside triphosphates as substrates. In Adiantum capillus-veneris (Maidenhair fern), this protein is DNA-directed RNA polymerase subunit alpha.